The primary structure comprises 88 residues: Large ribosomal subunit protein uL29 (88 aa).

This sequence belongs to the universal ribosomal protein uL29 family.

This chain is Large ribosomal subunit protein uL29 (rpl29), found in Sulfurisphaera tokodaii (strain DSM 16993 / JCM 10545 / NBRC 100140 / 7) (Sulfolobus tokodaii).